We begin with the raw amino-acid sequence, 64 residues long: Large ribosomal subunit protein uL29 (64 aa).

Belongs to the universal ribosomal protein uL29 family.

The sequence is that of Large ribosomal subunit protein uL29 from Synechococcus elongatus (strain ATCC 33912 / PCC 7942 / FACHB-805) (Anacystis nidulans R2).